The chain runs to 180 residues: Bifunctional protein PyrR (180 aa).

The PRPP-binding motif lies at 101–113 (VILVDDVLYTGRT).

It belongs to the purine/pyrimidine phosphoribosyltransferase family. PyrR subfamily. As to quaternary structure, homodimer and homohexamer; in equilibrium.

The catalysed reaction is UMP + diphosphate = 5-phospho-alpha-D-ribose 1-diphosphate + uracil. In terms of biological role, regulates transcriptional attenuation of the pyrimidine nucleotide (pyr) operon by binding in a uridine-dependent manner to specific sites on pyr mRNA. This disrupts an antiterminator hairpin in the RNA and favors formation of a downstream transcription terminator, leading to a reduced expression of downstream genes. Its function is as follows. Also displays a weak uracil phosphoribosyltransferase activity which is not physiologically significant. In Bacillus cereus (strain ATCC 14579 / DSM 31 / CCUG 7414 / JCM 2152 / NBRC 15305 / NCIMB 9373 / NCTC 2599 / NRRL B-3711), this protein is Bifunctional protein PyrR.